Here is a 126-residue protein sequence, read N- to C-terminus: Prefoldin subunit beta (126 aa).

This sequence belongs to the prefoldin subunit beta family. Heterohexamer of two alpha and four beta subunits.

The protein resides in the cytoplasm. Molecular chaperone capable of stabilizing a range of proteins. Seems to fulfill an ATP-independent, HSP70-like function in archaeal de novo protein folding. This is Prefoldin subunit beta from Saccharolobus islandicus (strain Y.N.15.51 / Yellowstone #2) (Sulfolobus islandicus).